Consider the following 89-residue polypeptide: UPF0335 protein OCAR_5086/OCA5_c28780 (89 aa).

The protein belongs to the UPF0335 family.

This chain is UPF0335 protein OCAR_5086/OCA5_c28780, found in Afipia carboxidovorans (strain ATCC 49405 / DSM 1227 / KCTC 32145 / OM5) (Oligotropha carboxidovorans).